The chain runs to 316 residues: Ribosomal protein L11 methyltransferase (316 aa).

The S-adenosyl-L-methionine site is built by threonine 157, glycine 178, aspartate 200, and asparagine 243.

This sequence belongs to the methyltransferase superfamily. PrmA family.

The protein resides in the cytoplasm. It catalyses the reaction L-lysyl-[protein] + 3 S-adenosyl-L-methionine = N(6),N(6),N(6)-trimethyl-L-lysyl-[protein] + 3 S-adenosyl-L-homocysteine + 3 H(+). In terms of biological role, methylates ribosomal protein L11. This chain is Ribosomal protein L11 methyltransferase, found in Streptococcus pneumoniae (strain ATCC 700669 / Spain 23F-1).